Reading from the N-terminus, the 413-residue chain is Putative competence-damage inducible protein (413 aa).

This sequence belongs to the CinA family.

The chain is Putative competence-damage inducible protein from Desulforudis audaxviator (strain MP104C).